A 260-amino-acid polypeptide reads, in one-letter code: Indole-3-glycerol phosphate synthase (260 aa).

The protein belongs to the TrpC family.

The enzyme catalyses 1-(2-carboxyphenylamino)-1-deoxy-D-ribulose 5-phosphate + H(+) = (1S,2R)-1-C-(indol-3-yl)glycerol 3-phosphate + CO2 + H2O. The protein operates within amino-acid biosynthesis; L-tryptophan biosynthesis; L-tryptophan from chorismate: step 4/5. This Neisseria gonorrhoeae (strain ATCC 700825 / FA 1090) protein is Indole-3-glycerol phosphate synthase.